The chain runs to 97 residues: YcgL domain-containing protein Maqu_1609 (97 aa).

The region spanning 5-89 is the YcgL domain; it reads EFVSVFRSSK…EQDTYIVDFK (85 aa).

The polypeptide is YcgL domain-containing protein Maqu_1609 (Marinobacter nauticus (strain ATCC 700491 / DSM 11845 / VT8) (Marinobacter aquaeolei)).